Reading from the N-terminus, the 230-residue chain is Probable fimbrial chaperone SfmC (230 aa).

A signal peptide spans Met-1–Ala-23.

The protein belongs to the periplasmic pilus chaperone family.

It localises to the periplasm. Part of the sfmACDHF fimbrial operon. Could contribute to adhesion to various surfaces in specific environmental niches. Increases adhesion to eukaryotic T24 bladder epithelial cells in the absence of fim genes. The protein is Probable fimbrial chaperone SfmC (sfmC) of Escherichia coli (strain K12).